Reading from the N-terminus, the 173-residue chain is Crossover junction endodeoxyribonuclease RuvC (173 aa).

Catalysis depends on residues Asp8, Glu67, and Asp139. Residues Asp8, Glu67, and Asp139 each contribute to the Mg(2+) site.

Belongs to the RuvC family. In terms of assembly, homodimer which binds Holliday junction (HJ) DNA. The HJ becomes 2-fold symmetrical on binding to RuvC with unstacked arms; it has a different conformation from HJ DNA in complex with RuvA. In the full resolvosome a probable DNA-RuvA(4)-RuvB(12)-RuvC(2) complex forms which resolves the HJ. It depends on Mg(2+) as a cofactor.

It localises to the cytoplasm. It carries out the reaction Endonucleolytic cleavage at a junction such as a reciprocal single-stranded crossover between two homologous DNA duplexes (Holliday junction).. Its function is as follows. The RuvA-RuvB-RuvC complex processes Holliday junction (HJ) DNA during genetic recombination and DNA repair. Endonuclease that resolves HJ intermediates. Cleaves cruciform DNA by making single-stranded nicks across the HJ at symmetrical positions within the homologous arms, yielding a 5'-phosphate and a 3'-hydroxyl group; requires a central core of homology in the junction. The consensus cleavage sequence is 5'-(A/T)TT(C/G)-3'. Cleavage occurs on the 3'-side of the TT dinucleotide at the point of strand exchange. HJ branch migration catalyzed by RuvA-RuvB allows RuvC to scan DNA until it finds its consensus sequence, where it cleaves and resolves the cruciform DNA. The polypeptide is Crossover junction endodeoxyribonuclease RuvC (Vibrio parahaemolyticus serotype O3:K6 (strain RIMD 2210633)).